Consider the following 267-residue polypeptide: Undecaprenyl-diphosphatase (267 aa).

The next 8 membrane-spanning stretches (helical) occupy residues 4-24, 41-61, 84-104, 116-136, 160-180, 185-205, 216-236, and 246-266; these read ILII…PISS, NIQN…ILLF, ILIL…GFMF, YISY…FISL, CFSL…GLIL, YVLF…VLIL, ENIF…LIFG, and TSLI…LFTC.

The protein belongs to the UppP family.

The protein resides in the cell membrane. The enzyme catalyses di-trans,octa-cis-undecaprenyl diphosphate + H2O = di-trans,octa-cis-undecaprenyl phosphate + phosphate + H(+). Its function is as follows. Catalyzes the dephosphorylation of undecaprenyl diphosphate (UPP). Confers resistance to bacitracin. The sequence is that of Undecaprenyl-diphosphatase from Wigglesworthia glossinidia brevipalpis.